The following is a 242-amino-acid chain: Leucyl/phenylalanyl-tRNA--protein transferase (242 aa).

It belongs to the L/F-transferase family.

The protein resides in the cytoplasm. The catalysed reaction is N-terminal L-lysyl-[protein] + L-leucyl-tRNA(Leu) = N-terminal L-leucyl-L-lysyl-[protein] + tRNA(Leu) + H(+). It catalyses the reaction N-terminal L-arginyl-[protein] + L-leucyl-tRNA(Leu) = N-terminal L-leucyl-L-arginyl-[protein] + tRNA(Leu) + H(+). The enzyme catalyses L-phenylalanyl-tRNA(Phe) + an N-terminal L-alpha-aminoacyl-[protein] = an N-terminal L-phenylalanyl-L-alpha-aminoacyl-[protein] + tRNA(Phe). Functionally, functions in the N-end rule pathway of protein degradation where it conjugates Leu, Phe and, less efficiently, Met from aminoacyl-tRNAs to the N-termini of proteins containing an N-terminal arginine or lysine. The polypeptide is Leucyl/phenylalanyl-tRNA--protein transferase (Edwardsiella ictaluri (strain 93-146)).